The sequence spans 525 residues: Ubiquitin carboxyl-terminal hydrolase 22 (525 aa).

The UBP-type zinc-finger motif lies at 21–138; sequence PGCSHLGSFK…KEEQRKAWKM (118 aa). Residues Cys23, His25, Cys63, Cys66, Cys76, Cys79, Cys84, His89, His93, His99, Cys112, and Cys115 each coordinate Zn(2+). Lys129 is subject to N6-acetyllysine. A Phosphothreonine; by CDK1 modification is found at Thr147. Residues 176–520 form the USP domain; sequence RGLINLGNTC…EGYLLFYHKQ (345 aa). Cys185 (nucleophile) is an active-site residue. Ser237 bears the Phosphoserine; by CDK1 mark. The active-site Proton acceptor is the His479.

The protein belongs to the peptidase C19 family. UBP8 subfamily. Component of some SAGA transcription coactivator-HAT complexes, at least composed of ATXN7, ATXN7L3, ENY2, GCN5L2, SUPT3H, TAF10, TRRAP and USP22. Within the SAGA complex, ATXN7L3, ENY2 and USP22 form a subcomplex required for histone deubiquitination. Interacts directly with ATXN7L3; leading to its recruitment to the SAGA complex. Interacts with ATXN7L3 and weakly with ATXN7L3B. Interacts with MED1. Phosphorylated in G2/M phase, but not in G1 phase by CDK1. Post-translationally, ubiquitinated and subsequently degraded in a CDC20-dependent manner. Moderately expressed in various tissues including heart and skeletal muscle, and weakly expressed in lung and liver.

It is found in the nucleus. The protein localises to the cytoplasm. The catalysed reaction is Thiol-dependent hydrolysis of ester, thioester, amide, peptide and isopeptide bonds formed by the C-terminal Gly of ubiquitin (a 76-residue protein attached to proteins as an intracellular targeting signal).. Functionally, deubiquitinase that plays a role in several cellular processes including transcriptional regulation, cell cycle progression or innate immunity. As part of the transcription regulatory histone acetylation (HAT) complex SAGA, catalyzes the deubiquitination of both histones H2A and H2B, thereby acting as a transcriptional coactivator. Recruited to specific gene promoters by activators such as MYC, where it is required for transcription. Facilitates cell-cycle progression by stabilizing CCNB1 and antagonizing its proteasome-mediated degradation in a cell cycle-specific manner. Modulates cell cycle progression and apoptosis also by antagonizing TP53 transcriptional activation through deacetylase SIRT1 stabilization. Plays multiple roles in immunity and inflammation. Participates in antiviral response by deubiquitinating the importin KPNA2, leading to IRF3 nuclear translocation and subsequent type I interferon production. Acts as a central regulator of type III IFN signaling by negatively regulating STING1 activation and ubiquitination. Inhibits NLRP3 inflammasome activation by promoting NLRP3 degradation through ATG5-dependent autophagy. Deubiquitinates CD274 to induce its stabilization and thereby participates in maintenance of immune tolerance to self. Controls necroptotic cell death by regulating RIPK3 phosphorylation and ubiquitination. During bacterial infection, promotes pro-inflammatory response by targeting TRAF6 and removing its 'Lys-48'-linked polyubiquitination. The sequence is that of Ubiquitin carboxyl-terminal hydrolase 22 (USP22) from Homo sapiens (Human).